The following is a 366-amino-acid chain: Aminomethyltransferase (366 aa).

It belongs to the GcvT family. The glycine cleavage system is composed of four proteins: P, T, L and H.

The catalysed reaction is N(6)-[(R)-S(8)-aminomethyldihydrolipoyl]-L-lysyl-[protein] + (6S)-5,6,7,8-tetrahydrofolate = N(6)-[(R)-dihydrolipoyl]-L-lysyl-[protein] + (6R)-5,10-methylene-5,6,7,8-tetrahydrofolate + NH4(+). The glycine cleavage system catalyzes the degradation of glycine. This is Aminomethyltransferase from Bacillus cereus (strain ATCC 10987 / NRS 248).